An 899-amino-acid chain; its full sequence is Protein translocase subunit SecA (899 aa).

ATP is bound by residues Q87, G105–T109, and D512. Positions M846–K899 are disordered. 4 residues coordinate Zn(2+): C885, C887, C896, and C897.

Belongs to the SecA family. In terms of assembly, monomer and homodimer. Part of the essential Sec protein translocation apparatus which comprises SecA, SecYEG and auxiliary proteins SecDF-YajC and YidC. Zn(2+) is required as a cofactor.

Its subcellular location is the cell inner membrane. The protein localises to the cytoplasm. The catalysed reaction is ATP + H2O + cellular proteinSide 1 = ADP + phosphate + cellular proteinSide 2.. Its function is as follows. Part of the Sec protein translocase complex. Interacts with the SecYEG preprotein conducting channel. Has a central role in coupling the hydrolysis of ATP to the transfer of proteins into and across the cell membrane, serving as an ATP-driven molecular motor driving the stepwise translocation of polypeptide chains across the membrane. The chain is Protein translocase subunit SecA from Geobacter metallireducens (strain ATCC 53774 / DSM 7210 / GS-15).